Reading from the N-terminus, the 280-residue chain is Exfoliative toxin A (280 aa).

A signal peptide spans Met1–Ala38. Catalysis depends on charge relay system residues His110, Asp158, and Ser233.

The protein belongs to the peptidase S1B family. The cofactor is Ca(2+).

Has serine protease-like properties and binds to the skin protein profilaggrin. Cleaves substrates after acidic residues. Exfoliative toxins cause impetigous diseases commonly referred as staphylococcal scalded skin syndrome (SSSS). The sequence is that of Exfoliative toxin A (eta) from Staphylococcus aureus.